The sequence spans 301 residues: Putative ribosomal RNA methyltransferase PB17E12.10c (301 aa).

Gly-87, Trp-89, Asp-107, and Asp-186 together coordinate S-adenosyl-L-methionine. The active-site Proton acceptor is Lys-247.

Belongs to the class I-like SAM-binding methyltransferase superfamily. RNA methyltransferase RlmE family.

The enzyme catalyses a uridine in rRNA + S-adenosyl-L-methionine = a 2'-O-methyluridine in rRNA + S-adenosyl-L-homocysteine + H(+). This is Putative ribosomal RNA methyltransferase PB17E12.10c from Schizosaccharomyces pombe (strain 972 / ATCC 24843) (Fission yeast).